The sequence spans 725 residues: Phosphoribosylformylglycinamidine synthase subunit PurL (725 aa).

H41 is a catalytic residue. ATP is bound by residues Y44 and K83. E85 is a Mg(2+) binding site. Residues 86-89 (SHNH) and R108 contribute to the substrate site. H87 (proton acceptor) is an active-site residue. Mg(2+) is bound at residue D109. A substrate-binding site is contributed by Q231. D259 is a Mg(2+) binding site. 303-305 (ESQ) serves as a coordination point for substrate. 2 residues coordinate ATP: D485 and G522. N523 lines the Mg(2+) pocket. S525 serves as a coordination point for substrate.

This sequence belongs to the FGAMS family. Monomer. Part of the FGAM synthase complex composed of 1 PurL, 1 PurQ and 2 PurS subunits.

The protein localises to the cytoplasm. The enzyme catalyses N(2)-formyl-N(1)-(5-phospho-beta-D-ribosyl)glycinamide + L-glutamine + ATP + H2O = 2-formamido-N(1)-(5-O-phospho-beta-D-ribosyl)acetamidine + L-glutamate + ADP + phosphate + H(+). It participates in purine metabolism; IMP biosynthesis via de novo pathway; 5-amino-1-(5-phospho-D-ribosyl)imidazole from N(2)-formyl-N(1)-(5-phospho-D-ribosyl)glycinamide: step 1/2. Functionally, part of the phosphoribosylformylglycinamidine synthase complex involved in the purines biosynthetic pathway. Catalyzes the ATP-dependent conversion of formylglycinamide ribonucleotide (FGAR) and glutamine to yield formylglycinamidine ribonucleotide (FGAM) and glutamate. The FGAM synthase complex is composed of three subunits. PurQ produces an ammonia molecule by converting glutamine to glutamate. PurL transfers the ammonia molecule to FGAR to form FGAM in an ATP-dependent manner. PurS interacts with PurQ and PurL and is thought to assist in the transfer of the ammonia molecule from PurQ to PurL. This Thermus thermophilus (strain ATCC BAA-163 / DSM 7039 / HB27) protein is Phosphoribosylformylglycinamidine synthase subunit PurL.